Here is a 118-residue protein sequence, read N- to C-terminus: Thioredoxin H-type (118 aa).

The Thioredoxin domain maps to 2 to 114 (AAEEGQVIGC…LQQTIAKHMA (113 aa)). Residues Cys40 and Cys43 each act as nucleophile in the active site. A disulfide bridge connects residues Cys40 and Cys43.

The protein belongs to the thioredoxin family. Plant H-type subfamily.

The protein resides in the cytoplasm. Its function is as follows. Participates in various redox reactions through the reversible oxidation of the active center dithiol to a disulfide. The H form is known to activate a number of cytosolic enzymes. The chain is Thioredoxin H-type from Ricinus communis (Castor bean).